The primary structure comprises 429 residues: Enolase 2 (429 aa).

Glutamine 163 is a binding site for (2R)-2-phosphoglycerate. Glutamate 205 serves as the catalytic Proton donor. Mg(2+) is bound by residues aspartate 242, glutamate 286, and aspartate 313. 4 residues coordinate (2R)-2-phosphoglycerate: lysine 338, arginine 367, serine 368, and lysine 389. Residue lysine 338 is the Proton acceptor of the active site.

It belongs to the enolase family. Mg(2+) serves as cofactor.

Its subcellular location is the cytoplasm. The protein resides in the secreted. The protein localises to the cell surface. It catalyses the reaction (2R)-2-phosphoglycerate = phosphoenolpyruvate + H2O. Its pathway is carbohydrate degradation; glycolysis; pyruvate from D-glyceraldehyde 3-phosphate: step 4/5. In terms of biological role, catalyzes the reversible conversion of 2-phosphoglycerate (2-PG) into phosphoenolpyruvate (PEP). It is essential for the degradation of carbohydrates via glycolysis. This Lactiplantibacillus plantarum (strain ATCC BAA-793 / NCIMB 8826 / WCFS1) (Lactobacillus plantarum) protein is Enolase 2.